The primary structure comprises 1518 residues: Putative cellulose synthase 3 (1518 aa).

Residues 1–731 are catalytic; it reads MYGTWFTTGK…EEKLEKQSFV (731 aa). 3 helical membrane-spanning segments follow: residues 24–44, 71–91, and 105–125; these read PVWV…SVRI, ITVF…VWRL, and LAVL…LSYF. A catalytic subdomain A region spans residues 144 to 237; that stretch reads QWPSVDVFVP…FAVIFDCDHV (94 aa). Active-site residues include Asp186 and Asp330. Residues 314–374 form a catalytic subdomain B region; that stretch reads EAVMGIGGFA…GQRVRWARGM (61 aa). 5 consecutive transmembrane segments (helical) span residues 404-424, 428-448, 465-485, 514-534, and 543-563; these read FLFA…LFLG, IAAS…HSVI, IYET…LLQP, ILAG…VWQF, and FILN…SIAV. Residues 569–668 enclose the PilZ domain; it reads QTRNAPRVSV…ERQVVSMVFG (100 aa). The tract at residues 732–1518 is cyclic di-GMP binding domain; that stretch reads LKPVPRSARH…IARDDLTGEL (787 aa). The segment at 765-785 is disordered; sequence APSPDQSGVTAETPFGDSNTG. Polar residues predominate over residues 768–785; that stretch reads PDQSGVTAETPFGDSNTG. Residues 1481 to 1501 form a helical membrane-spanning segment; that stretch reads ALYLAGLAGAGLAALGVWAWL.

In the N-terminal section; belongs to the glycosyltransferase 2 family. The protein in the C-terminal section; belongs to the AcsB/BcsB family.

It is found in the cell inner membrane. It catalyses the reaction [(1-&gt;4)-beta-D-glucosyl](n) + UDP-alpha-D-glucose = [(1-&gt;4)-beta-D-glucosyl](n+1) + UDP + H(+). Its pathway is glycan metabolism; bacterial cellulose biosynthesis. In Komagataeibacter xylinus (Gluconacetobacter xylinus), this protein is Putative cellulose synthase 3 (bcsABII-B).